We begin with the raw amino-acid sequence, 2238 residues long: Protein Ycf2 (2238 aa).

1579–1586 is an ATP binding site; the sequence is GSIGTGRS.

It belongs to the Ycf2 family.

The protein localises to the plastid. Probable ATPase of unknown function. Its presence in a non-photosynthetic plant (Epifagus virginiana) and experiments in tobacco indicate that it has an essential function which is probably not related to photosynthesis. This chain is Protein Ycf2, found in Cuscuta exaltata (Tall dodder).